The sequence spans 517 residues: MANADLSNFDKIIVLDFGSQYNQLITRRIREFGIYSELLSHKITAEEIKKINPKGIIFSGGPNSVYDKDAFRIDPEIYKLGIPILGICYGMQLMTYNLGGRVEPADNREYGHADIDVTDDQAVMFKELPAKQTVWMSHGDLVREVPEGFKTVATSANCPIASMADDARKFYGVQFHAEVRNTQYGNEILRHFAFDVCEAKANWSMNDFIDMQVQQIRETVGDRKVLLGLSGGVDSSVVGVLLNKAIGDQLVCIFVDHGLLRKGEAKQVMDSLEGKFGLNIIKVDAQDRFLSKLAGVSEPEQKRKIIGNEFIQVFNDEAQKLKGIDFLAQGTLYTDVIESGTDTAQTIKSHHNVGGLPEDMHFELIEPLRTLFKDEARDLGEKLGMPEDLVWRQPFPGPGLGIRVIGEITEDKLQIVRDSDLILREEIKKAGLDRDIWQYFTVLPGIRSVGVMGDGRTYDYTVGIRAVNSIDGMTADFARIPWDVLQKISVRIVNEVDHVNRIVYDITSKPPATVEWE.

The 192-residue stretch at 11–202 (KIIVLDFGSQ…AFDVCEAKAN (192 aa)) folds into the Glutamine amidotransferase type-1 domain. Residue Cys88 is the Nucleophile of the active site. Active-site residues include His176 and Glu178. Residues 203 to 392 (WSMNDFIDMQ…LGMPEDLVWR (190 aa)) form the GMPS ATP-PPase domain. 230-236 (SGGVDSS) contributes to the ATP binding site.

Homodimer.

It catalyses the reaction XMP + L-glutamine + ATP + H2O = GMP + L-glutamate + AMP + diphosphate + 2 H(+). Its pathway is purine metabolism; GMP biosynthesis; GMP from XMP (L-Gln route): step 1/1. Its function is as follows. Catalyzes the synthesis of GMP from XMP. The polypeptide is GMP synthase [glutamine-hydrolyzing] (Pediococcus pentosaceus (strain ATCC 25745 / CCUG 21536 / LMG 10740 / 183-1w)).